A 209-amino-acid polypeptide reads, in one-letter code: Uracil phosphoribosyltransferase (209 aa).

Residues Arg-79, Arg-104, and 131 to 139 (DPMLATGHS) contribute to the 5-phospho-alpha-D-ribose 1-diphosphate site. Uracil-binding positions include Ile-194 and 199–201 (GDA). Position 200 (Asp-200) interacts with 5-phospho-alpha-D-ribose 1-diphosphate.

The protein belongs to the UPRTase family. It depends on Mg(2+) as a cofactor.

The enzyme catalyses UMP + diphosphate = 5-phospho-alpha-D-ribose 1-diphosphate + uracil. It participates in pyrimidine metabolism; UMP biosynthesis via salvage pathway; UMP from uracil: step 1/1. Its activity is regulated as follows. Allosterically activated by GTP. Its function is as follows. Catalyzes the conversion of uracil and 5-phospho-alpha-D-ribose 1-diphosphate (PRPP) to UMP and diphosphate. The sequence is that of Uracil phosphoribosyltransferase from Caulobacter vibrioides (strain ATCC 19089 / CIP 103742 / CB 15) (Caulobacter crescentus).